Here is a 67-residue protein sequence, read N- to C-terminus: Large ribosomal subunit protein bL31 (67 aa).

Cys-16, Cys-18, Cys-36, and Cys-39 together coordinate Zn(2+).

It belongs to the bacterial ribosomal protein bL31 family. Type A subfamily. In terms of assembly, part of the 50S ribosomal subunit. Zn(2+) is required as a cofactor.

Functionally, binds the 23S rRNA. In Syntrophomonas wolfei subsp. wolfei (strain DSM 2245B / Goettingen), this protein is Large ribosomal subunit protein bL31.